The following is a 974-amino-acid chain: Leucine-rich repeat receptor-like kinase protein SUNN (974 aa).

The N-terminal stretch at 1 to 20 is a signal peptide; it reads MKNITCYLLLLCMLFTTCYS. Residues asparagine 75, asparagine 104, asparagine 123, and asparagine 136 are each glycosylated (N-linked (GlcNAc...) asparagine). LRR repeat units follow at residues 92-116, 117-141, 143-165, 166-188, 189-213, 238-262, 263-286, 288-309, 310-334, 335-358, 360-382, 383-406, 407-430, 431-454, 456-477, 478-501, 503-525, 527-549, 550-573, and 574-598; these read LNML…LSKL, TSLR…TFGM, KLEA…IVSL, MKLK…SYSE, FQKL…LSKL, IKSL…LGNL, ENLD…LSSM, SLMS…TFSK, LKNL…IGDL, PNLE…LGSN, KFIY…LCKS, KKLK…IGPC, KSLE…IFQL, PSVQ…ISGN, LGNL…MKNL, RSLQ…VFAL, VLTR…VTQC, SLTA…MKNL, KVLS…IRFM, and TSLT…QFLV. N-linked (GlcNAc...) asparagine glycosylation is found at asparagine 250 and asparagine 274. Residues asparagine 312 and asparagine 346 are each glycosylated (N-linked (GlcNAc...) asparagine). 2 N-linked (GlcNAc...) asparagine glycosylation sites follow: asparagine 508 and asparagine 513. N-linked (GlcNAc...) asparagine glycans are attached at residues asparagine 556 and asparagine 585. Residues 635-655 form a helical membrane-spanning segment; that stretch reads VVIAIVFATAVLMVIVTLHMM. In terms of domain architecture, Protein kinase spans 685–972; it reads LKEENIIGKG…PPHSTSHNLI (288 aa). Residues 691-699 and lysine 713 each bind ATP; that span reads IGKGGAGIV. Residue aspartate 810 is the Proton acceptor of the active site.

The protein belongs to the protein kinase superfamily. Ser/Thr protein kinase family. In terms of tissue distribution, expressed in roots and shoots. Expressed in the vasculature of leaves, petioles, stems and roots.

The protein localises to the cell membrane. The catalysed reaction is L-seryl-[protein] + ATP = O-phospho-L-seryl-[protein] + ADP + H(+). It catalyses the reaction L-threonyl-[protein] + ATP = O-phospho-L-threonyl-[protein] + ADP + H(+). Its function is as follows. LRR receptor kinase involved in the regulation of root growth and root nodule organogenesis. Involved in long distance nodulation signaling events. Involved in the autoregulation of nodulation (AON), a long distance systemic signaling from root to shoot and back again, which allows legumes to limit the number of root nodules formed based on available nitrogen and previous rhizobial colonization. Acts from shoot to root to control AON. Interacts with CLE12 and CLE13 signaling to control nodule numbers. Required for the modulation of shoot-to-root auxin transport in response to altered nitrogen tissue concentrations and in the absence of rhizobia. Shoot-to-root auxin transport influences lateral root density and length. Involved in the regulation of root colonization by arbuscular mycorrhizal (AM) fungi. Interacts with CLE33 and CL53 signaling to repress strigolactone biosynthetic genes and strigolactone content in the roots, and consequently reduces the promotion of further colonization by AM fungi. In Medicago truncatula (Barrel medic), this protein is Leucine-rich repeat receptor-like kinase protein SUNN.